A 386-amino-acid chain; its full sequence is Acyl-lipid omega-3 desaturase (cytochrome b5), endoplasmic reticulum (386 aa).

The segment at 1-30 (MVVAMDQRTNVNGDPGAGDRKKEERFDPSA) is disordered. A compositionally biased stretch (basic and acidic residues) spans 17–27 (AGDRKKEERFD). The helical transmembrane segment at 63-83 (IIAVAALAIAAVYVDSWFLWP) threads the bilayer. Residues 101 to 105 (HDCGH) carry the Histidine box-1 motif. A Histidine box-2 motif is present at residues 137-141 (HRTHH). 2 helical membrane-spanning segments follow: residues 220–240 (WSIM…LAVL) and 242–262 (VYGV…YLHH). The short motif at 304 to 308 (HVIHH) is the Histidine box-3 element.

The protein belongs to the fatty acid desaturase type 1 family. Abundant in leaves and seedlings. Barely detectable in root tissue.

It is found in the endoplasmic reticulum membrane. It catalyses the reaction a (9Z,12Z)-octadecadienoyl-containing glycerolipid + 2 Fe(II)-[cytochrome b5] + O2 + 2 H(+) = (9Z,12Z,15Z)-octadecatrienoyl-containing glycerolipid + 2 Fe(III)-[cytochrome b5] + 2 H2O. The protein operates within lipid metabolism; polyunsaturated fatty acid biosynthesis. Its function is as follows. Microsomal (ER) omega-3 fatty acid desaturase introduces the third double bond in the biosynthesis of 18:3 fatty acids, important constituents of plant membranes. It is thought to use cytochrome b5 as an electron donor and to act on fatty acids esterified to phosphatidylcholine and, possibly, other phospholipids. This is Acyl-lipid omega-3 desaturase (cytochrome b5), endoplasmic reticulum from Arabidopsis thaliana (Mouse-ear cress).